Reading from the N-terminus, the 358-residue chain is MLPEKRLLTPDDMKLWEESPTRAHFTKFIIDLAESVKGHENSQYKEPISESINSMMNLLSQIKDITQKHPVIKDADSSRFGKVEFRDFYDEVSRNSRKILRSEFPSLTDEQLEQLSIYLDESWGNKRRIDYGSGHELNFMCLLYGLYSYGIFNLSNDSTNLVLKVFIEYLKIMRILETKYWLEPAGSHGVWGLDDYHFLPFLFGAFQLTTHKHLKPISIHNNELVEMFAHRYLYFGCIAFINKVKSSASLRWHSPMLDDISGVKTWSKVAEGMIKMYKAEVLSKLPIMQHFYFSEFLPCPDGVSPPRGHIHDGTDKDDECNFEGHVHTTWGDCCGIKLPSAIAATEMNKKHHKPIPFD.

As to quaternary structure, interacts with the phosphatase PP2A catalytic subunits PPH21 and PPH22. Forms a ternary complex with PPH21-TAP42.

The protein localises to the cytoplasm. It catalyses the reaction [protein]-peptidylproline (omega=180) = [protein]-peptidylproline (omega=0). Functionally, PPIases accelerate the folding of proteins. It catalyzes the cis-trans isomerization of proline imidic peptide bonds in oligopeptides. Acts as a regulatory subunit for TAP42-associated PP2A-like phosphatases modulating their activity or substrate specificity, probably by inducing a conformational change in the catalytic subunit, a direct target of the PPIase. Can reactivate inactive phosphatase PP2A-phosphatase methylesterase complexes (PP2Ai) in presence of ATP and Mg(2+) by dissociating the inactive form from the complex. Acts also inhibitory at high concentrations. Involved in the regulation of cell cycle progression, mitotic spindle formation and bud morphogenesis. In Saccharomyces cerevisiae (strain ATCC 204508 / S288c) (Baker's yeast), this protein is Serine/threonine-protein phosphatase 2A activator 2 (RRD2).